Reading from the N-terminus, the 164-residue chain is MNIVDQQTFRDAMSCMGAAVNIITTDGPAGRAGFTASAVCSVTDTPPTLLVCLNRGASVWPVFNENRTLCVNTLSAGQEPLSNLFGGKTPMEHRFAAARWQTGVTGCPQLEEALVSFDCRINQVVSVGTHDILFCTIEAIHRHATPYGLVWFDRSYHALMRPAC.

Belongs to the non-flavoprotein flavin reductase family. RutF subfamily.

The catalysed reaction is FMNH2 + NAD(+) = FMN + NADH + 2 H(+). Functionally, catalyzes the reduction of FMN to FMNH2 which is used to reduce pyrimidine by RutA via the Rut pathway. In Escherichia coli O127:H6 (strain E2348/69 / EPEC), this protein is FMN reductase (NADH) RutF.